A 218-amino-acid polypeptide reads, in one-letter code: Glutathione S-transferase Mu 2 (218 aa).

Residues 2–88 (PMTLGYWNIR…YIARKHNLCG (87 aa)) enclose the GST N-terminal domain. 7–8 (YW) provides a ligand contact to glutathione. Phosphoserine is present on residues serine 27 and serine 44. Glutathione contacts are provided by residues 43-46 (RSQW), lysine 50, 59-60 (NL), and 72-73 (QS). In terms of domain architecture, GST C-terminal spans 90–208 (SEKEQIREDI…KSSRFLPRPV (119 aa)). Residue tyrosine 116 participates in substrate binding.

Belongs to the GST superfamily. Mu family. As to quaternary structure, homodimer. As to expression, muscle.

Its subcellular location is the cytoplasm. It catalyses the reaction RX + glutathione = an S-substituted glutathione + a halide anion + H(+). The enzyme catalyses 11(S)-hydroxy-14(S),15(S)-epoxy-(5Z,8Z,12E)-eicosatrienoate + glutathione = (11S,15S)-dihydroxy-14(R)-S-glutathionyl-(5Z,8Z,12E)-eicosatrienoate. Functionally, conjugation of reduced glutathione to a wide number of exogenous and endogenous hydrophobic electrophiles. Participates in the formation of novel hepoxilin regioisomers. The protein is Glutathione S-transferase Mu 2 of Homo sapiens (Human).